The sequence spans 146 residues: Microsomal glutathione S-transferase 2 (146 aa).

The next 3 membrane-spanning stretches (helical) occupy residues 6–26 (ILLA…AMQV), 59–79 (FYPI…QVFA), and 111–131 (SLGV…NSFL).

It belongs to the MAPEG family. As to quaternary structure, homotrimer.

It localises to the endoplasmic reticulum membrane. Its subcellular location is the microsome membrane. It carries out the reaction RX + glutathione = an S-substituted glutathione + a halide anion + H(+). The enzyme catalyses 1-chloro-2,4-dinitrobenzene + glutathione = 2,4-dinitrophenyl-S-glutathione + chloride + H(+). It catalyses the reaction leukotriene C4 = leukotriene A4 + glutathione. The catalysed reaction is (5S)-hydroperoxy-(6E,8Z,11Z,14Z)-eicosatetraenoate + 2 glutathione = (5S)-hydroxy-(6E,8Z,11Z,14Z)-eicosatetraenoate + glutathione disulfide + H2O. Each monomer binds on GSH molecule but only one subunit is catalytically active. Catalyzes several different glutathione-dependent reactions. Catalyzes the glutathione-dependent reduction of lipid hydroperoxides, such as 5-HPETE. Has glutathione transferase activity, toward xenobiotic electrophiles, such as 1-chloro-2, 4-dinitrobenzene (CDNB). Also catalyzes the conjugation of leukotriene A4 with reduced glutathione to form leukotriene C4 (LTC4). Involved in oxidative DNA damage induced by ER stress and anticancer agents by activating LTC4 biosynthetic machinery in nonimmune cells. The chain is Microsomal glutathione S-transferase 2 (MGST2) from Bos taurus (Bovine).